A 303-amino-acid polypeptide reads, in one-letter code: Cyclin-dependent kinase 4 (303 aa).

Ala2 is modified (N-acetylalanine). The Protein kinase domain occupies 6–295 (YEPVAEIGVG…AFRALQHSYL (290 aa)). ATP is bound by residues 12 to 20 (IGVGAYGTV) and Lys35. The tract at residues 50–56 (PISTVRE) is required for binding D-type cyclins. Asp140 serves as the catalytic Proton acceptor. The residue at position 172 (Thr172) is a Phosphothreonine; by CAK.

The protein belongs to the protein kinase superfamily. CMGC Ser/Thr protein kinase family. CDC2/CDKX subfamily. As to quaternary structure, component of the D-CDK4 complex, composed of CDK4 and some D-type G1 cyclin (CCND1, CCND2 or CCND3). Interacts directly in the complex with CCND1, CCND2 or CCND3. Interacts with SEI1 and ZNF655. Forms a ternary complex, cyclin D-CDK4-CDKN1B, involved in modulating CDK4 enzymatic activity. Interacts directly with CDKN1B (phosphorylated on 'Tyr-88' and 'Tyr-89'); the interaction allows assembly of the cyclin D-CDK4 complex, Thr-172 phosphorylation, nuclear translocation and enhances the cyclin D-CDK4 complex activity. CDK4 activity is either inhibited or enhanced depending on stoichiometry of complex. The non-tyrosine-phosphorylated form of CDKN1B prevents T-loop phosphorylation of CDK4 producing inactive CDK4. Interacts (unphosphorylated form) with CDK2. Also forms ternary complexes with CDKN1A or CDKN2A. Interacts directly with CDKN1A (via its N-terminal); the interaction promotes the assembly of the cyclin D-CDK4 complex, its nuclear translocation and promotes the cyclin D-dependent enzyme activity of CDK4. Interacts with CCND1; the interaction is prevented with the binding of CCND1 to INSM1 during cell cycle progression. Probably forms a complex composed of chaperones HSP90 and HSP70, co-chaperones CDC37, PPP5C, TSC1 and client protein TSC2, CDK4, AKT, RAF1 and NR3C1; this complex does not contain co-chaperones STIP1/HOP and PTGES3/p23. Interacts with CEBPA (when phosphorylated). Interacts with FNIP1 and FNIP2. Post-translationally, phosphorylation at Thr-172 is required for enzymatic activity. Phosphorylated, in vitro, at this site by CCNH-CDK7, but, in vivo, appears to be phosphorylated by a proline-directed kinase. In the cyclin D-CDK4-CDKN1B complex, this phosphorylation and consequent CDK4 enzyme activity, is dependent on the tyrosine phosphorylation state of CDKN1B. Thus, in proliferating cells, CDK4 within the complex is phosphorylated on Thr-172 in the T-loop. In resting cells, phosphorylation on Thr-172 is prevented by the non-tyrosine-phosphorylated form of CDKN1B.

It localises to the cytoplasm. The protein localises to the nucleus. The protein resides in the nucleus membrane. The catalysed reaction is L-seryl-[protein] + ATP = O-phospho-L-seryl-[protein] + ADP + H(+). The enzyme catalyses L-threonyl-[protein] + ATP = O-phospho-L-threonyl-[protein] + ADP + H(+). Its activity is regulated as follows. Both phosphorylation at Thr-172 and binding of a D-type cyclin are necessary for enzymatic activity. Full activation of the cyclin-D-CDK4 complex appears to require other factors such as recruitment of the substrate via a substrate recruitment motif, and/or formation of the CDKN1B ternary complex. Inhibited by INK4 family members. In resting cells, the non-tyrosine-phosphorylated form of CDKN1B prevents phosphorylation at Thr-172 and inactivation, while, in proliferating cells, tyrosine phosphorylation of CDKN1B allows phosphorylation of Thr-172 of CDK4 and subsequent activation. In terms of biological role, ser/Thr-kinase component of cyclin D-CDK4 (DC) complexes that phosphorylate and inhibit members of the retinoblastoma (RB) protein family including RB1 and regulate the cell-cycle during G(1)/S transition. Phosphorylation of RB1 allows dissociation of the transcription factor E2F from the RB/E2F complexes and the subsequent transcription of E2F target genes which are responsible for the progression through the G(1) phase. Hypophosphorylates RB1 in early G(1) phase. Cyclin D-CDK4 complexes are major integrators of various mitogenenic and antimitogenic signals. Also phosphorylates SMAD3 in a cell-cycle-dependent manner and represses its transcriptional activity. Component of the ternary complex, cyclin D/CDK4/CDKN1B, required for nuclear translocation and activity of the cyclin D-CDK4 complex. This chain is Cyclin-dependent kinase 4 (CDK4), found in Sus scrofa (Pig).